A 702-amino-acid chain; its full sequence is MLSGWSVLKGGNMKYWDKALLSLFMCVSTLSIAATHAVAMEGMQMTKEAREIIAHPKGTKESRGVISLQDYIVEEQAMYDWLFKNHPIFTKYGGKTVGKLVVKDRGEEWIEEGRGNDFSKASKRSGGEGFSSMMYRVARNSTLQYPNKFIGPEKCGECHPAQYETWSRSRHATTIRFPGEHPEVNNKLNDPVFDKDTASILPQGITPDVVYCTVGHIRTKFGFFDAWLLRGTYHVEGGLLKNGTGQIVAGGNQWQRTWALNLSPEVAKKIKKWVPDFPVTLEEYGDNGGYVRGLASYAAKYKKSMSFQASTSYCEVCHPWKFDFKNESEFYAALGNAKELQKHTISKGVSCEECHGAGGHLEGGSGLLISNCERCHQRFSYSPDLMRNNPLNAGKPDLALSSKFKSMGPGCGSEGSQTYFTAHYEKGMRCATCHDPHDVTGNVTGEKGIKGVSYNSEQGYLSSLYSKPKLKKECTDCHKEQAYIQSKADTHSKNSCASCHMPFMMSCENFYAIQFQDQAGFDTQRRAHIWKIDVDPARKSLVAGSTSKDPRDGKDWHFERNEEGRNFVDLMWACARTTWADKDQAEAKGCHSPVVSELKETLHFKDQKQVYNEVMGWQTPVKDKFTQVKVGIQGLYSLLEVKKLAPSDKTRVYELIEKAQDTVDLIEKDGSWGMHGFKYTKQRLDAAVEYINEAQRIMKKSL.

The signal sequence occupies residues 1–39; sequence MLSGWSVLKGGNMKYWDKALLSLFMCVSTLSIAATHAVA. Heme c is bound by residues C155, C158, H159, and H171. Substrate is bound by residues K220 and Y297. Heme c-binding residues include C314, C317, H318, C351, C354, H355, H360, C372, C375, and H376. R378 contributes to the substrate binding site. C411 is a binding site for Cu(+). H423, C430, C433, H434, H437, C474, C477, H478, H491, C496, C499, and H500 together coordinate heme c. Cu(+) is bound at residue C507. Residues H528, C574, C590, H591, and H675 each coordinate heme c.

Belongs to the multiheme cytochrome c family. Homotrimer. It depends on Cu(+) as a cofactor. Heme c serves as cofactor.

The protein localises to the periplasm. The catalysed reaction is [protein]-disulfide + hydrogen sulfide + 2 A + 3 H2O = [protein]-dithiol + sulfite + 2 AH2 + H(+). Its pathway is sulfur metabolism; sulfite reduction. In terms of biological role, respiratory sulfite reductase that catalyzes the reduction of sulfite to sulfide in a single step, consuming six electrons in the process. Required for sulfite respiration under anaerobic growth conditions. Has only marginal activity with nitrite. The chain is Dissimilatory sulfite reductase MccA from Wolinella succinogenes (strain ATCC 29543 / DSM 1740 / CCUG 13145 / JCM 31913 / LMG 7466 / NCTC 11488 / FDC 602W) (Vibrio succinogenes).